We begin with the raw amino-acid sequence, 546 residues long: Probable protein kinase UbiB (546 aa).

The Protein kinase domain maps to 123–501; it reads DFQEIPLASA…RTNHGQALFL (379 aa). ATP-binding positions include 129 to 137 and Lys152; that span reads LASASISQV. The active-site Proton acceptor is the Asp287. 2 helical membrane-spanning segments follow: residues 497 to 517 and 521 to 541; these read QALFLFGVGATLVTSSIFLYI and YLKIFSIFLFVIGIFIWTIGW.

The protein belongs to the ABC1 family. UbiB subfamily.

The protein resides in the cell inner membrane. It functions in the pathway cofactor biosynthesis; ubiquinone biosynthesis [regulation]. Its function is as follows. Is probably a protein kinase regulator of UbiI activity which is involved in aerobic coenzyme Q (ubiquinone) biosynthesis. The chain is Probable protein kinase UbiB from Blochmanniella pennsylvanica (strain BPEN).